Here is a 129-residue protein sequence, read N- to C-terminus: Small ribosomal subunit protein bS6 (129 aa).

This sequence belongs to the bacterial ribosomal protein bS6 family.

In terms of biological role, binds together with bS18 to 16S ribosomal RNA. The protein is Small ribosomal subunit protein bS6 of Pelobacter propionicus (strain DSM 2379 / NBRC 103807 / OttBd1).